A 375-amino-acid chain; its full sequence is Chaperone protein DnaJ 1 (375 aa).

The 65-residue stretch at 4 to 68 (DYYAILGVER…EKRRIVDMGG (65 aa)) folds into the J domain. The segment at 127-209 (GTKKPITIDT…CGGDGRVRTQ (83 aa)) adopts a CR-type zinc-finger fold. Residues C140, C143, C157, C160, C183, C186, C197, and C200 each coordinate Zn(2+). 4 CXXCXGXG motif repeats span residues 140 to 147 (CDRCEGTG), 157 to 164 (CSTCNGSG), 183 to 190 (CPTCRGTG), and 197 to 204 (CDKCGGDG).

This sequence belongs to the DnaJ family. Homodimer. It depends on Zn(2+) as a cofactor.

Its subcellular location is the cytoplasm. In terms of biological role, participates actively in the response to hyperosmotic and heat shock by preventing the aggregation of stress-denatured proteins and by disaggregating proteins, also in an autonomous, DnaK-independent fashion. Unfolded proteins bind initially to DnaJ; upon interaction with the DnaJ-bound protein, DnaK hydrolyzes its bound ATP, resulting in the formation of a stable complex. GrpE releases ADP from DnaK; ATP binding to DnaK triggers the release of the substrate protein, thus completing the reaction cycle. Several rounds of ATP-dependent interactions between DnaJ, DnaK and GrpE are required for fully efficient folding. Also involved, together with DnaK and GrpE, in the DNA replication of plasmids through activation of initiation proteins. The chain is Chaperone protein DnaJ 1 from Corynebacterium diphtheriae (strain ATCC 700971 / NCTC 13129 / Biotype gravis).